A 221-amino-acid polypeptide reads, in one-letter code: Urease accessory protein UreG (221 aa).

19–26 (GPVGSGKT) lines the GTP pocket.

Belongs to the SIMIBI class G3E GTPase family. UreG subfamily. As to quaternary structure, homodimer. UreD, UreF and UreG form a complex that acts as a GTP-hydrolysis-dependent molecular chaperone, activating the urease apoprotein by helping to assemble the nickel containing metallocenter of UreC. The UreE protein probably delivers the nickel.

The protein resides in the cytoplasm. Facilitates the functional incorporation of the urease nickel metallocenter. This process requires GTP hydrolysis, probably effectuated by UreG. This chain is Urease accessory protein UreG, found in Yersinia enterocolitica serotype O:8 / biotype 1B (strain NCTC 13174 / 8081).